The following is a 525-amino-acid chain: Zwittermicin A synthase ZmaJ (525 aa).

It belongs to the ATP-dependent AMP-binding enzyme family.

The catalysed reaction is holo-[peptidyl-carrier protein] + L-serine + ATP = L-seryl-[peptidyl-carrier protein] + AMP + diphosphate. Its pathway is antibiotic biosynthesis. Involved in the biosynthesis of the linear aminopolyol antibiotic zwittermicin A (ZmA). Specifically adenylates L-serine and loads it onto the holo form of ZmaH via a thioester linkage to the phosphopanthetheine moiety. The protein is Zwittermicin A synthase ZmaJ of Bacillus cereus.